Here is a 211-residue protein sequence, read N- to C-terminus: Ribosomal RNA small subunit methyltransferase G (211 aa).

S-adenosyl-L-methionine is bound by residues glycine 73, 126-127 (IE), and arginine 142.

Belongs to the methyltransferase superfamily. RNA methyltransferase RsmG family.

Its subcellular location is the cytoplasm. The catalysed reaction is guanosine(527) in 16S rRNA + S-adenosyl-L-methionine = N(7)-methylguanosine(527) in 16S rRNA + S-adenosyl-L-homocysteine. Its function is as follows. Specifically methylates the N7 position of guanine in position 527 of 16S rRNA. The sequence is that of Ribosomal RNA small subunit methyltransferase G from Methylorubrum extorquens (strain CM4 / NCIMB 13688) (Methylobacterium extorquens).